A 301-amino-acid polypeptide reads, in one-letter code: Light-independent protochlorophyllide reductase iron-sulfur ATP-binding protein (301 aa).

A compositionally biased stretch (low complexity) spans 1-13 (MNVTLRPPLTTAP). The disordered stretch occupies residues 1–21 (MNVTLRPPLTTAPRRPDGAGS). ATP contacts are provided by residues 45–50 (GIGKST) and lysine 74. Serine 49 contributes to the Mg(2+) binding site. [4Fe-4S] cluster-binding residues include cysteine 130 and cysteine 164. ATP is bound by residues 215 to 216 (NR) and 239 to 241 (PDL).

The protein belongs to the NifH/BchL/ChlL family. In terms of assembly, homodimer. Protochlorophyllide reductase is composed of three subunits; BchL, BchN and BchB. Requires [4Fe-4S] cluster as cofactor.

The catalysed reaction is chlorophyllide a + oxidized 2[4Fe-4S]-[ferredoxin] + 2 ADP + 2 phosphate = protochlorophyllide a + reduced 2[4Fe-4S]-[ferredoxin] + 2 ATP + 2 H2O. It functions in the pathway porphyrin-containing compound metabolism; bacteriochlorophyll biosynthesis (light-independent). Component of the dark-operative protochlorophyllide reductase (DPOR) that uses Mg-ATP and reduced ferredoxin to reduce ring D of protochlorophyllide (Pchlide) to form chlorophyllide a (Chlide). This reaction is light-independent. The L component serves as a unique electron donor to the NB-component of the complex, and binds Mg-ATP. In Bradyrhizobium sp. (strain BTAi1 / ATCC BAA-1182), this protein is Light-independent protochlorophyllide reductase iron-sulfur ATP-binding protein.